A 238-amino-acid chain; its full sequence is MQLPNLQSATLLRRYKRFLADVELNNGEILTLHCANTGAMTGCGEKGDTVWFSTSDSKTRKYPHSWELTQLKNGQTVCINTHRSNQLTLEALQNKIITELAEYDEILPEVKYGVENSRIDFLLKGKNLPDCYVEVKSVTFVKNHLGLFPDAVTTRGQKHLRELIAMKKRGHRAVVFFAGLHDGFNRFTVAKSIDPDYAELLQQAVKEGVEVYSYAVKFDFSHQKPTALYLTNLVNYLE.

It belongs to the SfsA family.

The chain is Sugar fermentation stimulation protein homolog from Histophilus somni (strain 129Pt) (Haemophilus somnus).